We begin with the raw amino-acid sequence, 371 residues long: MILKRISILNYKNLEQAELEFSPKMNCFIGQNGMGKTNLLDAVYYLSFCKSATNPIDSQNIRHEGEFFVIQGFYETDQGEPEEVYCGLKRRQKKQFKRNKKEYNRLSDHIGFIPLVMVSPADAELIAGGSDGRRRFMDVVISQYDKEYLDALIRYNKALTQRNALLKSEQEFDEELMLVWEEMMASAGEVVFKKRSEFIAEFIPTFQSFYSYISQDKEKVNLAYESHAMSGGLLDIIKESRRRDRVMGYSLKGVHKDDLIMQLGDFPIKREGSQGQNKTYLIALKLAQFDFLKKTGGNTTPLLLLDDIFDKLDAFRVEQIVKLVAGDRFGQIFITDTNRDHLDKILKKIEREYKVFAVEDGEVTERKEMAE.

Position 30 to 37 (30 to 37 (GQNGMGKT)) interacts with ATP.

It belongs to the RecF family.

The protein localises to the cytoplasm. Functionally, the RecF protein is involved in DNA metabolism; it is required for DNA replication and normal SOS inducibility. RecF binds preferentially to single-stranded, linear DNA. It also seems to bind ATP. The protein is DNA replication and repair protein RecF of Phocaeicola vulgatus (strain ATCC 8482 / DSM 1447 / JCM 5826 / CCUG 4940 / NBRC 14291 / NCTC 11154) (Bacteroides vulgatus).